The primary structure comprises 502 residues: MSNYPWLTIIVLLPIPAGLLIPLLPSPNGGNKIIRWYTLGICLLEFLLITHTFCYHFDIDNPFIQLREDYNWINIIDFHWRLGIDGFSIGLTPLTGFVTTLATLAAWPVTRSPRLFHSSMLAMYSGQVGLFTSQDILLFFLMWELELIPVYLLLSMWGGKRRLYAATKFILYTAGGSIPLLIGALTMGLHGFDEPTLDFQNLANRSYPIALEIVLYLSFFVAYAVKLPIFPLHTWLPDTHGEAHYSTCMLLAGILLKMGGYGLIRINMELLPHAHSIFAPWLVIVGAFQIVYAASISSSQRNSKRRIAYSSISHMGFVLIGIGSATNIGLNGAILQMISHGLIGAAPFSLAGTSYDRTRTPFLDQMGGIGTSMPKTFTMFSSFSMASLALPGTSGFAAESMVFPGIVSGKNYSLPFKIIITIVEAIGIILTPIYLLSMLRQMFYGYFNKVSNLSISHAMDSGPREIFISICLLLPTIGIGLYPNLILSLCNSKVEFILSHNF.

13 consecutive transmembrane segments (helical) span residues 4 to 24, 39 to 59, 89 to 109, 115 to 132, 136 to 156, 169 to 189, 209 to 229, 244 to 264, 276 to 296, 315 to 335, 387 to 407, 418 to 438, and 466 to 486; these read YPWLTIIVLLPIPAGLLIPLL, LGICLLEFLLITHTFCYHFDI, IGLTPLTGFVTTLATLAAWPV, LFHSSMLAMYSGQVGLFT, ILLFFLMWELELIPVYLLLSM, FILYTAGGSIPLLIGALTMGL, IALEIVLYLSFFVAYAVKLPI, HYSTCMLLAGILLKMGGYGLI, SIFAPWLVIVGAFQIVYAASI, MGFVLIGIGSATNIGLNGAIL, SLALPGTSGFAAESMVFPGIV, IIITIVEAIGIILTPIYLLSM, and IFISICLLLPTIGIGLYPNLI.

This sequence belongs to the complex I subunit 4 family.

Its subcellular location is the plastid. The protein localises to the chloroplast thylakoid membrane. The enzyme catalyses a plastoquinone + NADH + (n+1) H(+)(in) = a plastoquinol + NAD(+) + n H(+)(out). It carries out the reaction a plastoquinone + NADPH + (n+1) H(+)(in) = a plastoquinol + NADP(+) + n H(+)(out). In Huperzia lucidula (Shining clubmoss), this protein is NAD(P)H-quinone oxidoreductase chain 4, chloroplastic.